The following is a 109-amino-acid chain: Aquaporin-2 (109 aa).

Topologically, residues 1 to 6 are cytoplasmic; that stretch reads SIAFSR. The helical transmembrane segment at 7-27 threads the bilayer; the sequence is AVFTEFLATLLFVFFGLGSAL. Topologically, residues 28-35 are extracellular; the sequence is NWPQALPS. Residues 36-54 traverse the membrane as a helical segment; it reads VLQIAMAFGLAIGTLVQML. Residues 55 to 59 are Cytoplasmic-facing; the sequence is GHISG. Positions 60–69 form an intramembrane region, discontinuously helical; it reads AHINPAVTVA. The NPA 1 signature appears at 63-65; that stretch reads NPA. Over 70–80 the chain is Cytoplasmic; that stretch reads CLVGCHISFLR. The helical transmembrane segment at 81 to 102 threads the bilayer; it reads AAFYVAAQLLGAVAGAALLHEV. The Extracellular segment spans residues 103-109; that stretch reads TPPSIRG.

Belongs to the MIP/aquaporin (TC 1.A.8) family. Homotetramer. Serine phosphorylation is necessary and sufficient for expression at the apical membrane. Endocytosis is not phosphorylation-dependent. Post-translationally, N-glycosylated.

The protein localises to the apical cell membrane. Its subcellular location is the basolateral cell membrane. The protein resides in the cell membrane. It localises to the cytoplasmic vesicle membrane. It is found in the golgi apparatus. The protein localises to the trans-Golgi network membrane. The catalysed reaction is H2O(in) = H2O(out). It carries out the reaction glycerol(in) = glycerol(out). Forms a water-specific channel that provides the plasma membranes of renal collecting duct with high permeability to water, thereby permitting water to move in the direction of an osmotic gradient. Plays an essential role in renal water homeostasis. Could also be permeable to glycerol. The polypeptide is Aquaporin-2 (Erinaceus europaeus (Western European hedgehog)).